Consider the following 232-residue polypeptide: Ribonuclease 3 (232 aa).

The RNase III domain maps to Lys-5–Gly-134. Glu-47 provides a ligand contact to Mg(2+). Residue Asp-51 is part of the active site. Mg(2+) contacts are provided by Asp-120 and Glu-123. Residue Glu-123 is part of the active site. One can recognise a DRBM domain in the interval Asp-160–Ser-229. Residues Lys-203–Phe-232 are disordered. Basic and acidic residues predominate over residues Lys-213–Phe-232.

It belongs to the ribonuclease III family. Homodimer. Mg(2+) is required as a cofactor.

It is found in the cytoplasm. It catalyses the reaction Endonucleolytic cleavage to 5'-phosphomonoester.. In terms of biological role, digests double-stranded RNA. Involved in the processing of primary rRNA transcript to yield the immediate precursors to the large and small rRNAs (23S and 16S). Processes some mRNAs, and tRNAs when they are encoded in the rRNA operon. Processes pre-crRNA and tracrRNA of type II CRISPR loci if present in the organism. In Streptococcus sanguinis (strain SK36), this protein is Ribonuclease 3.